The sequence spans 142 residues: Hemoglobin A subunit alpha-1 (142 aa).

The Globin domain maps to 2-142 (VLTAGDKANV…VATALTSKYR (141 aa)). His59 provides a ligand contact to O2. His88 is a heme b binding site.

This sequence belongs to the globin family. As to quaternary structure, tetramer of alpha-1, alpha-2 and two identical beta chains. As to expression, red blood cells.

Involved in oxygen transport from the lung to the various peripheral tissues. The polypeptide is Hemoglobin A subunit alpha-1 (Aldabrachelys gigantea (Aldabra giant tortoise)).